Reading from the N-terminus, the 652-residue chain is Phosphomethylpyrimidine synthase (652 aa).

Substrate contacts are provided by residues Asn257, Met286, Tyr315, His351, 371–373, 412–415, and Glu451; these read SRG and DGLR. Residue His455 participates in Zn(2+) binding. Tyr478 contributes to the substrate binding site. His519 lines the Zn(2+) pocket. Positions 599, 602, and 607 each coordinate [4Fe-4S] cluster.

This sequence belongs to the ThiC family. Homodimer. It depends on [4Fe-4S] cluster as a cofactor.

The enzyme catalyses 5-amino-1-(5-phospho-beta-D-ribosyl)imidazole + S-adenosyl-L-methionine = 4-amino-2-methyl-5-(phosphooxymethyl)pyrimidine + CO + 5'-deoxyadenosine + formate + L-methionine + 3 H(+). Its pathway is cofactor biosynthesis; thiamine diphosphate biosynthesis. Catalyzes the synthesis of the hydroxymethylpyrimidine phosphate (HMP-P) moiety of thiamine from aminoimidazole ribotide (AIR) in a radical S-adenosyl-L-methionine (SAM)-dependent reaction. The protein is Phosphomethylpyrimidine synthase of Thiobacillus denitrificans (strain ATCC 25259 / T1).